The sequence spans 257 residues: MSKPLILVTNDDGISAPGIRSLIAVMQEIGTVVVVAPDSPQSAMGHAITINSTLHLNKISAENAAVTEYSCSGTPVDCVKLAVNEILKQKPDLCVSGVNHGSNSSINVIYSGTMSAAVEAGIEGIPAIGFSLLDYDWNADFETFKPYIKKIALEVLQKGLPDSVVLNVNFPKRKEEDLKGIKICRQAKAMWEEKFDKRKTPQGKDYYWLTGEFVNHDKGEDTDEWALQNGYISVVPVQFDMTAHHAIQALNNWDLNK.

A divalent metal cation is bound by residues aspartate 11, aspartate 12, serine 42, and asparagine 99.

This sequence belongs to the SurE nucleotidase family. It depends on a divalent metal cation as a cofactor.

The protein localises to the cytoplasm. It catalyses the reaction a ribonucleoside 5'-phosphate + H2O = a ribonucleoside + phosphate. Functionally, nucleotidase that shows phosphatase activity on nucleoside 5'-monophosphates. The protein is 5'-nucleotidase SurE of Flavobacterium psychrophilum (strain ATCC 49511 / DSM 21280 / CIP 103535 / JIP02/86).